The chain runs to 360 residues: DNA replication and repair protein RecF (360 aa).

33–40 contributes to the ATP binding site; that stretch reads GENGSGKT.

The protein belongs to the RecF family.

The protein resides in the cytoplasm. The RecF protein is involved in DNA metabolism; it is required for DNA replication and normal SOS inducibility. RecF binds preferentially to single-stranded, linear DNA. It also seems to bind ATP. This Rickettsia bellii (strain OSU 85-389) protein is DNA replication and repair protein RecF.